The chain runs to 393 residues: Phosphoglycerate kinase (393 aa).

Substrate is bound by residues 21–23, R36, 59–62, R114, and R147; these read DLN and HLGR. ATP contacts are provided by residues K198, E314, and 340-343; that span reads GGDT.

The protein belongs to the phosphoglycerate kinase family. As to quaternary structure, monomer.

It is found in the cytoplasm. It catalyses the reaction (2R)-3-phosphoglycerate + ATP = (2R)-3-phospho-glyceroyl phosphate + ADP. It functions in the pathway carbohydrate degradation; glycolysis; pyruvate from D-glyceraldehyde 3-phosphate: step 2/5. The chain is Phosphoglycerate kinase from Buchnera aphidicola subsp. Baizongia pistaciae (strain Bp).